Here is a 419-residue protein sequence, read N- to C-terminus: Glutamyl-tRNA reductase (419 aa).

Substrate contacts are provided by residues 49–52, Ser107, 112–114, and Gln118; these read TCNR and EPQ. The active-site Nucleophile is the Cys50. Residue 187-192 coordinates NADP(+); it reads GAGETI.

Belongs to the glutamyl-tRNA reductase family. Homodimer.

The enzyme catalyses (S)-4-amino-5-oxopentanoate + tRNA(Glu) + NADP(+) = L-glutamyl-tRNA(Glu) + NADPH + H(+). It participates in porphyrin-containing compound metabolism; protoporphyrin-IX biosynthesis; 5-aminolevulinate from L-glutamyl-tRNA(Glu): step 1/2. In terms of biological role, catalyzes the NADPH-dependent reduction of glutamyl-tRNA(Glu) to glutamate 1-semialdehyde (GSA). The sequence is that of Glutamyl-tRNA reductase from Psychromonas ingrahamii (strain DSM 17664 / CCUG 51855 / 37).